Consider the following 300-residue polypeptide: Inosose dehydratase (300 aa).

The protein belongs to the IolE/MocC family. Requires glutathione as cofactor. It depends on Co(2+) as a cofactor. Mn(2+) serves as cofactor.

It carries out the reaction scyllo-inosose = 3D-3,5/4-trihydroxycyclohexane-1,2-dione + H2O. Catalyzes the dehydration of inosose (2-keto-myo-inositol, 2KMI or 2,4,6/3,5-pentahydroxycyclohexanone) to 3D-(3,5/4)-trihydroxycyclohexane-1,2-dione (D-2,3-diketo-4-deoxy-epi-inositol). The polypeptide is Inosose dehydratase (Mesomycoplasma hyopneumoniae (strain 232) (Mycoplasma hyopneumoniae)).